The following is a 439-amino-acid chain: Proline--tRNA ligase (439 aa).

Belongs to the class-II aminoacyl-tRNA synthetase family. ProS type 2 subfamily. In terms of assembly, homodimer.

The protein localises to the cytoplasm. The catalysed reaction is tRNA(Pro) + L-proline + ATP = L-prolyl-tRNA(Pro) + AMP + diphosphate. Functionally, catalyzes the attachment of proline to tRNA(Pro) in a two-step reaction: proline is first activated by ATP to form Pro-AMP and then transferred to the acceptor end of tRNA(Pro). The polypeptide is Proline--tRNA ligase (Phenylobacterium zucineum (strain HLK1)).